The chain runs to 496 residues: Angiopoietin-2 (496 aa).

An N-terminal signal peptide occupies residues 1–18 (MWQIVFLTFGCDLVLASA). N-linked (GlcNAc...) asparagine glycosylation is found at N89, N119, N133, N151, N240, and N304. Residues 159–256 (QLLQHSISTN…QQHDLMETVN (98 aa)) adopt a coiled-coil conformation. Residues 280-496 (TFRDCAEIFK…TTMMIRPADF (217 aa)) enclose the Fibrinogen C-terminal domain. A disulfide bridge links C284 with C313. The Ca(2+) site is built by D429, D431, C433, and C435. 2 disulfide bridges follow: C433/C435 and C437/C450.

As to quaternary structure, interacts with TEK/TIE2, competing for the same binding site as ANGPT1. Interacts with ITGA5. Interacts with SVEP1/polydom. Interacts with THBD; this interaction significantly inhibits the generation of activated PC and TAFIa/CPB2 by the thrombin/thrombomodulin complex.

Its subcellular location is the secreted. Binds to TEK/TIE2, competing for the ANGPT1 binding site, and modulating ANGPT1 signaling. Can induce tyrosine phosphorylation of TEK/TIE2 in the absence of ANGPT1. In the absence of angiogenic inducers, such as VEGF, ANGPT2-mediated loosening of cell-matrix contacts may induce endothelial cell apoptosis with consequent vascular regression. In concert with VEGF, it may facilitate endothelial cell migration and proliferation, thus serving as a permissive angiogenic signal. Involved in the regulation of lymphangiogenesis. The chain is Angiopoietin-2 (Angpt2) from Rattus norvegicus (Rat).